The sequence spans 210 residues: uncharacterized protein (210 aa).

A phosphoserine mark is found at serine 18, serine 39, serine 41, serine 57, and serine 60. Residues leucine 33–alanine 46 show a composition bias toward polar residues. Residues leucine 33–glycine 58 are disordered. 2 disordered regions span residues tyrosine 100 to serine 139 and aspartate 177 to threonine 210. The segment covering histidine 102–methionine 116 has biased composition (polar residues). Residues asparagine 130–serine 139 show a composition bias toward basic and acidic residues. Serine 178, serine 189, and serine 192 each carry phosphoserine. A compositionally biased stretch (polar residues) spans histidine 191–threonine 210.

This is an uncharacterized protein from Saccharomyces cerevisiae (strain ATCC 204508 / S288c) (Baker's yeast).